Consider the following 283-residue polypeptide: Pyridoxal kinase PdxY (283 aa).

Ser-8 lines the substrate pocket. ATP-binding residues include Asp-110 and Glu-147. Residue Asp-219 coordinates substrate.

The protein belongs to the pyridoxine kinase family. PdxY subfamily. In terms of assembly, homodimer. Requires Mg(2+) as cofactor.

It catalyses the reaction pyridoxal + ATP = pyridoxal 5'-phosphate + ADP + H(+). The protein operates within cofactor metabolism; pyridoxal 5'-phosphate salvage; pyridoxal 5'-phosphate from pyridoxal: step 1/1. In terms of biological role, pyridoxal kinase involved in the salvage pathway of pyridoxal 5'-phosphate (PLP). Catalyzes the phosphorylation of pyridoxal to PLP. This is Pyridoxal kinase PdxY from Leifsonia xyli subsp. xyli (strain CTCB07).